The chain runs to 249 residues: 2,3-bisphosphoglycerate-dependent phosphoglycerate mutase (249 aa).

Residues 11–18 (RHGNSEWN), 24–25 (TG), arginine 63, 90–93 (ERHY), lysine 101, 117–118 (RR), and 185–186 (GN) contribute to the substrate site. The Tele-phosphohistidine intermediate role is filled by histidine 12. Glutamate 90 functions as the Proton donor/acceptor in the catalytic mechanism.

The protein belongs to the phosphoglycerate mutase family. BPG-dependent PGAM subfamily.

The enzyme catalyses (2R)-2-phosphoglycerate = (2R)-3-phosphoglycerate. The protein operates within carbohydrate degradation; glycolysis; pyruvate from D-glyceraldehyde 3-phosphate: step 3/5. In terms of biological role, catalyzes the interconversion of 2-phosphoglycerate and 3-phosphoglycerate. The chain is 2,3-bisphosphoglycerate-dependent phosphoglycerate mutase from Leifsonia xyli subsp. xyli (strain CTCB07).